The following is a 177-amino-acid chain: UPF0340 protein STH78 (177 aa).

This sequence belongs to the UPF0340 family.

The polypeptide is UPF0340 protein STH78 (Symbiobacterium thermophilum (strain DSM 24528 / JCM 14929 / IAM 14863 / T)).